Here is a 1087-residue protein sequence, read N- to C-terminus: 2'-5'-oligoadenylate synthase 3 (1087 aa).

Position 1 is an N-acetylmethionine (Met-1). An OAS domain 1 region spans residues 6–343 (TPAAALDRFV…GDPVQSWKGP (338 aa)). Interaction with dsRNA regions lie at residues 12–57 (DRFV…VLKT) and 186–200 (ELRR…AKLK). The segment at 344–410 (GLPRAGCSGL…VPGMALDLSQ (67 aa)) is linker. The residue at position 365 (Thr-365) is a Phosphothreonine. 2 OAS domain regions span residues 411-742 (IPTK…PWDV) and 750-1084 (TPAG…WPVK). Ser-804 provides a ligand contact to ATP. Mg(2+) is bound by residues Asp-816, Asp-818, and Asp-888. ATP-binding residues include Arg-947, Lys-950, and Gln-969.

This sequence belongs to the 2-5A synthase family. As to quaternary structure, monomer. The cofactor is Mg(2+). As to expression, present at high level in placenta trophoblast.

Its subcellular location is the cytoplasm. It localises to the nucleus. It carries out the reaction 3 ATP = 5'-triphosphoadenylyl-(2'-&gt;5')-adenylyl-(2'-&gt;5')-adenosine + 2 diphosphate. Its activity is regulated as follows. Produced as a latent enzyme which is activated by dsRNA generated during the course of viral infection. Strongly activated by long dsRNAs at least 50 nucleotides in length. ssRNA does not activate the enzyme. Functionally, interferon-induced, dsRNA-activated antiviral enzyme which plays a critical role in cellular innate antiviral response. In addition, it may also play a role in other cellular processes such as apoptosis, cell growth, differentiation and gene regulation. Synthesizes preferentially dimers of 2'-5'-oligoadenylates (2-5A) from ATP which then bind to the inactive monomeric form of ribonuclease L (RNase L) leading to its dimerization and subsequent activation. Activation of RNase L leads to degradation of cellular as well as viral RNA, resulting in the inhibition of protein synthesis, thus terminating viral replication. Can mediate the antiviral effect via the classical RNase L-dependent pathway or an alternative antiviral pathway independent of RNase L. Displays antiviral activity against Chikungunya virus (CHIKV), Dengue virus, Sindbis virus (SINV) and Semliki forest virus (SFV). The sequence is that of 2'-5'-oligoadenylate synthase 3 (OAS3) from Homo sapiens (Human).